The sequence spans 33 residues: Putative tumor antigen NA88-A (33 aa).

As to expression, expressed in testis and melanoma cell lines.

The sequence is that of Putative tumor antigen NA88-A (VENTXP1) from Homo sapiens (Human).